The following is a 336-amino-acid chain: Putative ataxin-3 homolog (336 aa).

A Josephin domain is found at 10-193 (GGLLYHEVQE…KECPMATEGS (184 aa)). Catalysis depends on C23, which acts as the Nucleophile. The Proton acceptor role is filled by H132. N147 is a catalytic residue. A UIM domain is found at 244 to 263 (QEEADLNAAIAASLMDTGGP). The segment at 281–336 (IESTSGEMSKDGNLEEQGANKSETSEPNSDNIESASGSNPKQNTTSLEGKESIKED) is disordered. Positions 299–327 (ANKSETSEPNSDNIESASGSNPKQNTTSL) are enriched in polar residues.

The protein resides in the nucleus. The catalysed reaction is Thiol-dependent hydrolysis of ester, thioester, amide, peptide and isopeptide bonds formed by the C-terminal Gly of ubiquitin (a 76-residue protein attached to proteins as an intracellular targeting signal).. Functionally, interacts with key regulators of transcription and represses transcription. Acts as a histone-binding protein that regulates transcription. Acts as a deubiquitinating enzyme. The protein is Putative ataxin-3 homolog of Oryza sativa subsp. japonica (Rice).